We begin with the raw amino-acid sequence, 112 residues long: DNA-binding protein TGAM_1196 (112 aa).

The protein belongs to the PDCD5 family.

This chain is DNA-binding protein TGAM_1196, found in Thermococcus gammatolerans (strain DSM 15229 / JCM 11827 / EJ3).